Here is a 531-residue protein sequence, read N- to C-terminus: MRNLRAAAPASFLAPPAPPLLLPPSTPTPRGAFSAKASPAAAAAQAHGWCPSPRRVGRLRRRAGAASSSVASVEDAKKDVLVALSQIIDPDFGTDIVSCGFVKDLEISEALEEVSFRLELTTPACPIKDMFEEKANEVVAALPWVKKVNVTMSAQPARPAYAGELPEGLQKISNIIAVSSCKGGVGKSTVAVNLAYTLAGMGARVGIFDADVFGPSLPTMVSPENRLLVMNPESRSILPTEYLGVKMVSFGFAGQGRAIMRGPMVSGVINQLLTTTDWGELDYLVIDMPPGTGDIHLTLCQVAPLTAAVIVTTPQKLAFIDVAKGVRMFSKLKVPCVAVVENMCYFDADGKRFYPFGQGSGAQVVQQFGIPHLFDLPIRPTLSASGDTGIPEVVADPQGDVAKTFQNLGVCVVQQCAKIRQQVSTAVSYDRSIRAIRVKVPDSDEEFLLHPATVRRNDRSAQSVDEWTGEQKVQYGDIPEDIEPEEIRPMGNYAVSITWPDGFSQIAPYDQLEMLERLVDVPRATTAAVSS.

The transit peptide at 1 to 62 directs the protein to the chloroplast; that stretch reads MRNLRAAAPA…PRRVGRLRRR (62 aa). A compositionally biased stretch (pro residues) spans 17–27; that stretch reads APPLLLPPSTP. Positions 17–37 are disordered; it reads APPLLLPPSTPTPRGAFSAKA. Positions 28-37 are enriched in low complexity; it reads TPRGAFSAKA. 181-188 serves as a coordination point for ATP; sequence CKGGVGKS.

This sequence belongs to the Mrp/NBP35 ATP-binding proteins family. It depends on [4Fe-4S] cluster as a cofactor.

Its subcellular location is the plastid. It is found in the chloroplast stroma. Functionally, required for photosystem I (PSI) biosynthesis and assembly. May serve as a chloroplast scaffold protein that specifically assembles iron-sulfur (4Fe-4S) clusters and transfers them to the chloroplast PSI and ferredoxin-thioredoxin (FTR) complexes. Probably not required for assembly or stability of plastidic 2Fe-2S clusters. This Oryza sativa subsp. japonica (Rice) protein is Fe-S cluster assembly factor HCF101, chloroplastic (HCF101).